Consider the following 564-residue polypeptide: Probable lysosomal cobalamin transporter (564 aa).

9 consecutive transmembrane segments (helical) span residues Leu-8–Ile-28, Val-41–Val-61, Thr-94–Phe-114, Tyr-144–Thr-164, Ala-188–Thr-208, Leu-312–Thr-332, Val-375–Phe-395, Leu-418–Ile-438, and Phe-506–Leu-526.

This sequence belongs to the LIMR family. LMBRD1 subfamily.

It localises to the lysosome membrane. Probable lysosomal cobalamin transporter. Required to export cobalamin from lysosomes allowing its conversion to cofactors. The chain is Probable lysosomal cobalamin transporter from Aspergillus clavatus (strain ATCC 1007 / CBS 513.65 / DSM 816 / NCTC 3887 / NRRL 1 / QM 1276 / 107).